Consider the following 174-residue polypeptide: Cathepsin B-like cysteine proteinase 3 (174 aa).

2 cysteine pairs are disulfide-bonded: Cys22–Cys55 and Cys30–Cys42. Residues His122 and Asn142 contribute to the active site.

The protein belongs to the peptidase C1 family.

In terms of biological role, expression of the protease correlates with blood-feeding and suggests a role for the protease in blood digestion. The chain is Cathepsin B-like cysteine proteinase 3 (CP-3) from Ostertagia ostertagi (Brown stomach worm).